The chain runs to 109 residues: Thiosulfate sulfurtransferase GlpE (109 aa).

Residues 17–105 form the Rhodanese domain; that stretch reads KEGKTALVDI…WARSYPQDIT (89 aa). Catalysis depends on cysteine 65, which acts as the Cysteine persulfide intermediate.

The protein belongs to the GlpE family.

The protein resides in the cytoplasm. It catalyses the reaction thiosulfate + hydrogen cyanide = thiocyanate + sulfite + 2 H(+). The enzyme catalyses thiosulfate + [thioredoxin]-dithiol = [thioredoxin]-disulfide + hydrogen sulfide + sulfite + 2 H(+). Its function is as follows. Transferase that catalyzes the transfer of sulfur from thiosulfate to thiophilic acceptors such as cyanide or dithiols. May function in a CysM-independent thiosulfate assimilation pathway by catalyzing the conversion of thiosulfate to sulfite, which can then be used for L-cysteine biosynthesis. The chain is Thiosulfate sulfurtransferase GlpE from Yersinia pestis.